The chain runs to 357 residues: Putative F-box/kelch-repeat protein At5g38680 (357 aa).

Residues 14 to 61 (NSNPSLPDALIISCIARVSRLYYPILSFVSKSFRSLLASPELYKERSL) form the F-box domain. Kelch repeat units follow at residues 131–175 (NIYN…VLDG), 177–224 (IYVA…SKSL), 226–267 (IDEK…YCEI), and 268–313 (ENVL…GGKK).

This Arabidopsis thaliana (Mouse-ear cress) protein is Putative F-box/kelch-repeat protein At5g38680.